Consider the following 462-residue polypeptide: DEK domain-containing chromatin-associated protein 1 (462 aa).

Disordered stretches follow at residues 18–91 (AVTE…TQGR) and 212–390 (KETK…RKEL). Positions 20–32 (TEKDTETKKKDEV) are enriched in basic and acidic residues. A compositionally biased stretch (acidic residues) spans 33–46 (EKDEAMEEKGEEID). The span at 77–91 (PRSSGNKPLSITQGR) shows a compositional bias: polar residues. The segment covering 267–276 (NGEDDVAPEE) has biased composition (acidic residues). Basic and acidic residues-rich tracts occupy residues 277–303 (ENNK…TDKK), 312–322 (EKPAAEEEKSI), and 347–360 (QKVD…EKGK). The short motif at 344–351 (SKKQKVDK) is the Nuclear localization signal element. Residues 384 to 439 (EPTRKELHVVVTKILKEVDFNTATLSDILRKLGSHFGIDLMHRKAEVKDIITDAIN) form the DEK-C domain. 2 DNA-binding regions span residues 402–416 (DFNT…RKLG) and 431–435 (KDIIT). The disordered stretch occupies residues 438–462 (INEMSDDDDEKEEDTEDEGEKEGKD). Residues 441–462 (MSDDDDEKEEDTEDEGEKEGKD) show a composition bias toward acidic residues.

Found in a mRNA splicing-dependent exon junction complex (EJC). Binds specifically histones H3 and H4.

It localises to the nucleus. It is found in the nucleolus. In terms of biological role, chromatin-associated protein which contributes to the modulation of chromatin structure (such as super-helical structure of DNA) and function. Binds to chromatin of protein-coding genes throughout the genome to regulate nucleosome occupancy and chromatin accessibility, and to modulate the expression of target genes. This chain is DEK domain-containing chromatin-associated protein 1, found in Arabidopsis thaliana (Mouse-ear cress).